Consider the following 205-residue polypeptide: Small ribosomal subunit protein uS4 (205 aa).

Positions 18 to 46 (NIWGRPKSPVNRREYGPGQHGQRRKGKLS) are disordered. One can recognise an S4 RNA-binding domain in the interval 94–157 (RRLDTVVYRA…KQLTFVLEAN (64 aa)).

This sequence belongs to the universal ribosomal protein uS4 family. Part of the 30S ribosomal subunit. Contacts protein S5. The interaction surface between S4 and S5 is involved in control of translational fidelity.

In terms of biological role, one of the primary rRNA binding proteins, it binds directly to 16S rRNA where it nucleates assembly of the body of the 30S subunit. Functionally, with S5 and S12 plays an important role in translational accuracy. This chain is Small ribosomal subunit protein uS4, found in Rhodopseudomonas palustris (strain BisB18).